A 1180-amino-acid chain; its full sequence is DNA-directed RNA polymerase subunit beta' (1180 aa).

4 residues coordinate Zn(2+): cysteine 60, cysteine 62, cysteine 75, and cysteine 78. The Mg(2+) site is built by aspartate 449, aspartate 451, and aspartate 453. Residues cysteine 792, cysteine 872, cysteine 879, and cysteine 882 each coordinate Zn(2+).

This sequence belongs to the RNA polymerase beta' chain family. The RNAP catalytic core consists of 2 alpha, 1 beta, 1 beta' and 1 omega subunit. When a sigma factor is associated with the core the holoenzyme is formed, which can initiate transcription. Mg(2+) serves as cofactor. Requires Zn(2+) as cofactor.

The catalysed reaction is RNA(n) + a ribonucleoside 5'-triphosphate = RNA(n+1) + diphosphate. DNA-dependent RNA polymerase catalyzes the transcription of DNA into RNA using the four ribonucleoside triphosphates as substrates. The sequence is that of DNA-directed RNA polymerase subunit beta' from Heliobacterium modesticaldum (strain ATCC 51547 / Ice1).